Reading from the N-terminus, the 408-residue chain is Argininosuccinate synthase (408 aa).

ATP is bound by residues 12–20 (AYSGGLDTS) and Ala-39. L-citrulline-binding residues include Tyr-92 and Ser-97. Gly-122 is an ATP binding site. Thr-124, Asn-128, and Asp-129 together coordinate L-aspartate. Asn-128 provides a ligand contact to L-citrulline. Residues Arg-132, Ser-183, Ser-192, Glu-268, and Tyr-280 each coordinate L-citrulline.

It belongs to the argininosuccinate synthase family. Type 1 subfamily. As to quaternary structure, homotetramer.

Its subcellular location is the cytoplasm. It catalyses the reaction L-citrulline + L-aspartate + ATP = 2-(N(omega)-L-arginino)succinate + AMP + diphosphate + H(+). The protein operates within amino-acid biosynthesis; L-arginine biosynthesis; L-arginine from L-ornithine and carbamoyl phosphate: step 2/3. In Caulobacter vibrioides (strain ATCC 19089 / CIP 103742 / CB 15) (Caulobacter crescentus), this protein is Argininosuccinate synthase.